A 395-amino-acid polypeptide reads, in one-letter code: Acetylornithine aminotransferase (395 aa).

Residues 117-118 (GA) and Phe144 each bind pyridoxal 5'-phosphate. Position 147 (Arg147) interacts with N(2)-acetyl-L-ornithine. Residue 230-233 (DEVQ) participates in pyridoxal 5'-phosphate binding. Lys259 bears the N6-(pyridoxal phosphate)lysine mark. Ser285 contributes to the N(2)-acetyl-L-ornithine binding site. Pyridoxal 5'-phosphate is bound at residue Thr286.

The protein belongs to the class-III pyridoxal-phosphate-dependent aminotransferase family. ArgD subfamily. In terms of assembly, homodimer. Pyridoxal 5'-phosphate is required as a cofactor.

It is found in the cytoplasm. The enzyme catalyses N(2)-acetyl-L-ornithine + 2-oxoglutarate = N-acetyl-L-glutamate 5-semialdehyde + L-glutamate. Its pathway is amino-acid biosynthesis; L-arginine biosynthesis; N(2)-acetyl-L-ornithine from L-glutamate: step 4/4. This Methanosarcina mazei (strain ATCC BAA-159 / DSM 3647 / Goe1 / Go1 / JCM 11833 / OCM 88) (Methanosarcina frisia) protein is Acetylornithine aminotransferase.